A 237-amino-acid polypeptide reads, in one-letter code: MQISSLSPPEIVAVLPAAGNGSRMQNDRPKQYLTIGNDATGHKTILEHTIDALLRHSRVQRVVVVISPDDTFFHTLAIANDPRICAVTGGKLRADSVLAGLAVVADSAWALVHDAARPCLHQDDLTRLLAIVEQSDVGGILAAPVRDTMKRSTDGFIDRTVERNDLWHALTPQLFPAALLKQCLQRALQDGVAVTDEASALEYCGYRPQIISGRSDNIKVTRPEDLALAEFYLTRLQ.

Belongs to the IspD/TarI cytidylyltransferase family. IspD subfamily. As to quaternary structure, homodimer.

The catalysed reaction is 2-C-methyl-D-erythritol 4-phosphate + CTP + H(+) = 4-CDP-2-C-methyl-D-erythritol + diphosphate. The protein operates within isoprenoid biosynthesis; isopentenyl diphosphate biosynthesis via DXP pathway; isopentenyl diphosphate from 1-deoxy-D-xylulose 5-phosphate: step 2/6. Its function is as follows. Catalyzes the formation of 4-diphosphocytidyl-2-C-methyl-D-erythritol from CTP and 2-C-methyl-D-erythritol 4-phosphate (MEP). The polypeptide is 2-C-methyl-D-erythritol 4-phosphate cytidylyltransferase (Pectobacterium atrosepticum (strain SCRI 1043 / ATCC BAA-672) (Erwinia carotovora subsp. atroseptica)).